Consider the following 120-residue polypeptide: Ribosome-binding factor A (120 aa).

It belongs to the RbfA family. Monomer. Binds 30S ribosomal subunits, but not 50S ribosomal subunits or 70S ribosomes.

The protein localises to the cytoplasm. Functionally, one of several proteins that assist in the late maturation steps of the functional core of the 30S ribosomal subunit. Associates with free 30S ribosomal subunits (but not with 30S subunits that are part of 70S ribosomes or polysomes). Required for efficient processing of 16S rRNA. May interact with the 5'-terminal helix region of 16S rRNA. The chain is Ribosome-binding factor A from Chlamydia caviae (strain ATCC VR-813 / DSM 19441 / 03DC25 / GPIC) (Chlamydophila caviae).